The sequence spans 625 residues: Probable potassium transport system protein Kup 2 (625 aa).

12 consecutive transmembrane segments (helical) span residues 10 to 30, 47 to 67, 104 to 124, 140 to 160, 172 to 192, 214 to 234, 250 to 270, 283 to 303, 347 to 367, 369 to 389, 396 to 416, and 422 to 442; these read LAAL…TSPL, GVHL…VVTL, VLLL…VITP, PAFK…LFAV, FGPV…AEII, GWHM…VEAL, WLGL…ALLM, LFPQ…TVIA, WLLL…SALA, AYGI…FFVV, PLPV…LLVV, and FFQG…VMAT.

Belongs to the HAK/KUP transporter (TC 2.A.72) family.

It localises to the cell inner membrane. The catalysed reaction is K(+)(in) + H(+)(in) = K(+)(out) + H(+)(out). Functionally, transport of potassium into the cell. Likely operates as a K(+):H(+) symporter. The polypeptide is Probable potassium transport system protein Kup 2 (Albidiferax ferrireducens (strain ATCC BAA-621 / DSM 15236 / T118) (Rhodoferax ferrireducens)).